The primary structure comprises 227 residues: 2,3-bisphosphoglycerate-dependent phosphoglycerate mutase (227 aa).

Substrate contacts are provided by residues 7–14 (RHGLSEWN), 20–21 (TG), arginine 59, 86–89 (ERHY), lysine 97, 113–114 (RR), and 182–183 (GN). The active-site Tele-phosphohistidine intermediate is the histidine 8. The active-site Proton donor/acceptor is the glutamate 86.

It belongs to the phosphoglycerate mutase family. BPG-dependent PGAM subfamily. As to quaternary structure, homodimer.

It catalyses the reaction (2R)-2-phosphoglycerate = (2R)-3-phosphoglycerate. It participates in carbohydrate degradation; glycolysis; pyruvate from D-glyceraldehyde 3-phosphate: step 3/5. Its function is as follows. Catalyzes the interconversion of 2-phosphoglycerate and 3-phosphoglycerate. This chain is 2,3-bisphosphoglycerate-dependent phosphoglycerate mutase, found in Mannheimia succiniciproducens (strain KCTC 0769BP / MBEL55E).